The sequence spans 354 residues: UPF0283 protein YcjF (354 aa).

The next 3 membrane-spanning stretches (helical) occupy residues methionine 71 to valine 91, isoleucine 101 to valine 121, and glutamate 214 to tryptophan 234.

The protein belongs to the UPF0283 family.

The protein localises to the cell inner membrane. The protein is UPF0283 protein YcjF (ycjF) of Yersinia enterocolitica.